A 286-amino-acid polypeptide reads, in one-letter code: MQRYWRFQDNKIQDICFGVLGESWIQRPVMARYYSEGQSLQQDDSFIEGVSDQVLVAVVVSLALTATLLYALLRNVQQNIHPENQELVRVLREQFQTEQDVPAPARQQFYTEMYCPICLHQASFPVETNCGHLFCGSCIIAYWRYGSWLGAISCPICRQTVTLLLTVFGEDDQSQDVIRLRQDVNDYNRRFSGQPRSIMERIMDLPTLLRHAFREVFSVGGLFWMFRIRIMLCLMGAFFYLISPLDFVPEALFGILGFLDDFFVIFLLLIYISIMYREVITQRLTR.

Residues 1 to 52 (MQRYWRFQDNKIQDICFGVLGESWIQRPVMARYYSEGQSLQQDDSFIEGVSD) lie on the Lumenal side of the membrane. Residues 53-73 (QVLVAVVVSLALTATLLYALL) traverse the membrane as a helical segment. Residues 74–229 (RNVQQNIHPE…GGLFWMFRIR (156 aa)) lie on the Cytoplasmic side of the membrane. The RING-type zinc finger occupies 115-158 (CPICLHQASFPVETNCGHLFCGSCIIAYWRYGSWLGAISCPICR). Residues 230–250 (IMLCLMGAFFYLISPLDFVPE) form a helical membrane-spanning segment. Residue alanine 251 is a topological domain, lumenal. Residues 252–272 (LFGILGFLDDFFVIFLLLIYI) traverse the membrane as a helical segment. Over 273–286 (SIMYREVITQRLTR) the chain is Cytoplasmic.

In terms of assembly, constitutively associated with the ERLIN1/ERLIN 2 complex. Interacts with activated ITPR1.

It is found in the endoplasmic reticulum membrane. It catalyses the reaction S-ubiquitinyl-[E2 ubiquitin-conjugating enzyme]-L-cysteine + [acceptor protein]-L-lysine = [E2 ubiquitin-conjugating enzyme]-L-cysteine + N(6)-ubiquitinyl-[acceptor protein]-L-lysine.. Its pathway is protein modification; protein ubiquitination. Functionally, E3 ubiquitin-protein ligase that plays an essential role in stimulus-induced inositol 1,4,5-trisphosphate receptor type 1 (ITPR1) ubiquitination and degradation via the endoplasmic reticulum-associated degradation (ERAD) pathway. Also involved in ITPR1 turnover in resting cells. Selectively inhibits the TLR3-triggered innate immune response by promoting the 'Lys-48'-linked polyubiquitination and degradation of TLR3. The chain is E3 ubiquitin-protein ligase RNF170 (Rnf170) from Mus musculus (Mouse).